The primary structure comprises 589 residues: Complement component C8 beta chain (589 aa).

The N-terminal stretch at 1 to 31 (MKTGAQVWRALAKSCLLCAALGCLHLPGARG) is a signal peptide. Residues 32 to 53 (EKPDFFETNAVNGSLVRSRPVR) constitute a propeptide that is removed on maturation. N-linked (GlcNAc...) asparagine glycosylation is present at Asn-43. In terms of domain architecture, TSP type-1 1 spans 63–116 (DCQLSTWSSWTACDPCQKKRYRHTYLLRPSQFYGELCDFSDKEVEDCVTNRACR). Disulfide bonds link Cys-64–Cys-99, Cys-75–Cys-109, Cys-78–Cys-115, Cys-121–Cys-132, Cys-126–Cys-145, Cys-139–Cys-154, and Cys-161–Cys-199. C-linked (Man) tryptophan glycosylation is found at Trp-69 and Trp-72. Positions 120 to 155 (RCEGFVCAQTGRCVNRRLLCNGDNDCGDQSDEANCR) constitute an LDL-receptor class A domain. Leu-137, Asn-140, Asp-142, Asp-144, Asp-150, and Glu-151 together coordinate Ca(2+). The region spanning 157–503 (IYKKCSQDME…EFQMEVSSCR (347 aa)) is the MACPF domain. N-linked (GlcNAc...) asparagine glycosylation occurs at Asn-242. Beta stranded transmembrane passes span 251–258 (SSFKFGFK), 261–268 (GLVEFGVR), 378–385 (AGGGFQIG), and 391–398 (VYLKLGVS). Residues Cys-377 and Cys-402 are joined by a disulfide bond. At Thr-417 the chain carries Phosphothreonine. Cystine bridges form between Cys-502/Cys-549, Cys-504/Cys-520, Cys-507/Cys-522, and Cys-524/Cys-533. The 31-residue stretch at 504-534 (CAPCRNNGVPILKESRCECICPAGFQGVACE) folds into the EGF-like domain. Residues 544–587 (DGKWSCWSDWSPCSGGRKTRQRQCNNPAPQRGGSPCSGPASETL) form the TSP type-1 2 domain. Trp-550 and Trp-553 each carry a C-linked (Man) tryptophan glycan. The cysteines at positions 556 and 589 are disulfide-linked. The disordered stretch occupies residues 556-589 (CSGGRKTRQRQCNNPAPQRGGSPCSGPASETLDC).

Belongs to the complement C6/C7/C8/C9 family. In terms of assembly, heterotrimer of 3 chains: alpha (C8A), beta (C8B) and gamma (C8G); the alpha and gamma chains are disulfide bonded. Component of the membrane attack complex (MAC), composed of complement C5b, C6, C7, C8A, C8B, C8G and multiple copies of the pore-forming subunit C9. In terms of processing, N-glycosylated; contains one or two bound glycans. Not O-glycosylated.

The protein localises to the secreted. The protein resides in the target cell membrane. Membrane attack complex (MAC) assembly is inhibited by CD59, thereby protecting self-cells from damage during complement activation. CD59 acts by binding to the beta-haipins of C8 (C8A and C8B), forming an intermolecular beta-sheet that prevents incorporation of the multiple copies of C9 required for complete formation of the osmolytic pore. MAC assembly is also inhibited by clusterin (CLU) chaperones that inhibit polymerization of C9. Its function is as follows. Component of the membrane attack complex (MAC), a multiprotein complex activated by the complement cascade, which inserts into a target cell membrane and forms a pore, leading to target cell membrane rupture and cell lysis. The MAC is initiated by proteolytic cleavage of C5 into complement C5b in response to the classical, alternative, lectin and GZMK complement pathways. The complement pathways consist in a cascade of proteins that leads to phagocytosis and breakdown of pathogens and signaling that strengthens the adaptive immune system. C8B, together with C8A and C8G, inserts into the target membrane, but does not form pores by itself. During MAC assembly, associates with C5b, C6 and C7 to form the C5b8 intermediate complex that inserts into the target membrane and traverses the bilayer increasing membrane rigidity. This is Complement component C8 beta chain (C8b) from Rattus norvegicus (Rat).